Reading from the N-terminus, the 759-residue chain is TIR domain-containing adapter molecule 1 (759 aa).

Positions 1-153 are TRIF-NTD; sequence MACTGPSLSG…CGWDVLGDLG (153 aa). The TRAF6-binding signature appears at 84–91; the sequence is ETPEEPPD. The pLxIS motif motif lies at 207 to 210; it reads LEIS. Serine 210 is subject to Phosphoserine. Residue lysine 229 forms a Glycyl lysine isopeptide (Lys-Gly) (interchain with G-Cter in ubiquitin) linkage. The interval 241-296 is disordered; it reads EPAPMGCQEPEEMSWPPSVEAADSPVRPSSPGPGLPEVTTDACPASPHDPPEVPEI. Short sequence motifs (TRAF6-binding) lie at residues 248–255 and 299–309; these read QEPEEMSW and HYPVECTDVPA. The disordered stretch occupies residues 340–426; that stretch reads LSAQPRPPTP…PEPPPPELES (87 aa). Low complexity predominate over residues 351 to 365; the sequence is VPQTSPSFPSASTSP. Pro residues predominate over residues 366-376; the sequence is FPSPSTPPEAH. One can recognise a TIR domain in the interval 430–590; sequence KFYNFVVLHA…QDARALREQS (161 aa). A sufficient to induce apoptosis region spans residues 549-759; that stretch reads LLDEHSKIFA…APEDNTRETE (211 aa). The disordered stretch occupies residues 642-723; that stretch reads GQGSLGTPPS…PPARPQSPGL (82 aa). Pro residues predominate over residues 659–705; the sequence is HQPPPLPPWLGGTPPPIFPQPPQTFPQPPPTFPQPPPTFQQPPPACP.

As to quaternary structure, homodimer. Found in a multi-helicase-TICAM1 complex at least composed of DHX36, DDX1, DDX21 and TICAM1; this complex exists in resting cells with or without poly(I:C) RNA ligand stimulation. Interacts (via TIR domain) with DDX21 (via C-terminus). Interacts (via TIR domain) with DHX36 (via C-terminus). Interacts with AZI2 and IRF7. Interacts with TICAM2 in TLR4 recruitment. Interaction with PIAS4 inhibits the TICAM1-induced NF-kappa-B, IRF and IFNB1 activation. Interacts with IKBKB and IKBKE. Interaction with SARM1 blocks TICAM1-dependent transcription factor activation. Interacts with TRAF3. Interacts (when phosphorylated) with IRF3; following activation and phosphorylation on the pLxIS motif by TBK1, recruits IRF3. Interacts with TBK1, TRAF6 and RIPK1 and these interactions are enhanced in the presence of WDFY1. Interacts with TRAFD1. Interacts with UBQLN1 (via UBA domain). Interacts with TLR4 in response to LPS in a WDFY1-dependent manner. Interacts with WDFY1 in response to poly(I:C). Interacts (via the TIR domain) with TLR3 in response to poly(I:C) and this interaction is enhanced in the presence of WDFY1. Interacts with TRIM56. Component of a multi-helicase-TICAM1 complex that acts as a cytoplasmic sensor of viral double-stranded RNA (dsRNA) and plays a role in the activation of a cascade of antiviral responses including the induction of pro-inflammatory cytokines. Interacts (via the TIR domain) with TLR5. Interacts with TRIM8. Interacts with TAX1BP1 and TRIM32; these interactions target TICAM1 to TAX1BP1-mediated selective autophagic degradation. Interacts with DDX50. Phosphorylated by TBK1. Following activation, phosphorylated by TBK1 at Ser-210 in the pLxIS motif. The phosphorylated pLxIS motif constitutes an IRF3-binding motif, leading to recruitment of the transcription factor IRF3 to induce type-I interferons and other cytokines. In terms of processing, polyubiquitinated at Lys-229 by TRIM38 with 'Lys-48'-linked chains, leading to proteasomal degradation. Polyubiquitinated with 'Lys-6' and 'Lys-33'-linked chains in a TRIM8-dependent manner.

Its subcellular location is the cytoplasmic vesicle. The protein localises to the autophagosome. The protein resides in the cytoplasm. It is found in the cytosol. It localises to the mitochondrion. Involved in innate immunity against invading pathogens. Adapter used by TLR3, TLR4 (through TICAM2) and TLR5 to mediate NF-kappa-B and interferon-regulatory factor (IRF) activation, and to induce apoptosis. Ligand binding to these receptors results in TRIF recruitment through its TIR domain. Distinct protein-interaction motifs allow recruitment of the effector proteins TBK1, TRAF6 and RIPK1, which in turn, lead to the activation of transcription factors IRF3 and IRF7, NF-kappa-B and FADD respectively. Phosphorylation by TBK1 on the pLxIS motif leads to recruitment and subsequent activation of the transcription factor IRF3 to induce expression of type I interferon and exert a potent immunity against invading pathogens. Component of a multi-helicase-TICAM1 complex that acts as a cytoplasmic sensor of viral double-stranded RNA (dsRNA) and plays a role in the activation of a cascade of antiviral responses including the induction of pro-inflammatory cytokines. The protein is TIR domain-containing adapter molecule 1 (TICAM1) of Bos taurus (Bovine).